The chain runs to 403 residues: G2/mitotic-specific cyclin-B3 (403 aa).

Disordered stretches follow at residues 1–86 (MPVA…APPA) and 102–122 (RKTPPADVPVEPEKDSVPEEP). Residues 7–25 (SKAQSSKQPRASKAPSVTE) show a composition bias toward polar residues. The D-box motif lies at 51-59 (RSAFGDITN).

The protein belongs to the cyclin family. Cyclin AB subfamily. Interacts with the CDK1 and CDK2 protein kinases. Post-translationally, ubiquitinated, leading to its degradation.

The protein localises to the nucleus. Its function is as follows. Cyclins are positive regulatory subunits of the cyclin-dependent kinases (CDKs), and thereby play an essential role in the control of the cell cycle, notably via their destruction during cell division. Could be involved at the G2/M (mitosis or meiosis) transition. G2/M cyclins accumulate steadily during G2 and are abruptly destroyed at mitosis. This chain is G2/mitotic-specific cyclin-B3 (CCNB3), found in Gallus gallus (Chicken).